The primary structure comprises 249 residues: Phosphate import ATP-binding protein PstB (249 aa).

The 240-residue stretch at 5–244 (LRIEDLHFWY…PEKDRTEAYV (240 aa)) folds into the ABC transporter domain. Position 37-44 (37-44 (GPSGCGKS)) interacts with ATP.

The protein belongs to the ABC transporter superfamily. Phosphate importer (TC 3.A.1.7) family. In terms of assembly, the complex is composed of two ATP-binding proteins (PstB), two transmembrane proteins (PstC and PstA) and a solute-binding protein (PstS).

It localises to the cell inner membrane. It carries out the reaction phosphate(out) + ATP + H2O = ADP + 2 phosphate(in) + H(+). Functionally, part of the ABC transporter complex PstSACB involved in phosphate import. Responsible for energy coupling to the transport system. This Salinibacter ruber (strain DSM 13855 / M31) protein is Phosphate import ATP-binding protein PstB.